The sequence spans 716 residues: ATP-dependent DNA helicase DinG (716 aa).

Residues 1 to 114 form an HD1 domain N-terminus region; the sequence is MALTAALKAQ…PDLKFTAAFG (114 aa). Residues 17 to 294 form the Helicase ATP-binding domain; it reads ALQEQIPDFI…TCMEQFRPKT (278 aa). Residues I26, Q31, K60, and T61 each contribute to the ATP site. Residues 115–216 form a [4Fe-4S] domain region; that stretch reads RGRYVCPRNL…FFVARREIQE (102 aa). Residues C120, C194, C199, and C205 each contribute to the [4Fe-4S] cluster site. An HD1 domain middle region spans residues 217 to 261; the sequence is AEVVVANHALVMAAMESEAVLPDPKNLLLVLDEGHHLPDVARDAL. The DEAH box motif lies at 248–251; that stretch reads DEGH. An arch domain region spans residues 262–438; sequence EMSAEITAPW…LHLWFHCVGI (177 aa). The interval 439-491 is HD1 domain middle; it reads RVSDQLERLLWRSIPHIIVTSATLRSLNSFSRLQEMSGLKEKAGDRFVALDSP. Residues 492 to 716 are HD2 domain; it reads FNHCEQGKIV…KTKSPRRRRR (225 aa). Residues D599, R656, and R659 each coordinate ATP.

It belongs to the helicase family. DinG subfamily. Type 1 sub-subfamily. As to quaternary structure, monomer in solution. It depends on [4Fe-4S] cluster as a cofactor. The cofactor is Mg(2+).

It carries out the reaction Couples ATP hydrolysis with the unwinding of duplex DNA at the replication fork by translocating in the 5'-3' direction. This creates two antiparallel DNA single strands (ssDNA). The leading ssDNA polymer is the template for DNA polymerase III holoenzyme which synthesizes a continuous strand.. The catalysed reaction is ATP + H2O = ADP + phosphate + H(+). ATPase activity is 15-fold stimulated by single-stranded DNA (ssDNA). Reduction of the [4Fe-4S] cluster reversibly switches off helicase activity. Remains fully active after exposure to 100-fold excess of hydrogen peroxide, but the [4Fe-4S] cluster can be efficiently modified by nitric oxide (NO), forming the DinG-bound dinitrosyl iron complex with the concomitant inactivation of helicase activity. Helicase activity on G-quadruplex DNA is inhibited by porphyrin derivatives meso-tetra (N-methyl-4-pyridyl) porphine tetra tosylate (T4) and N-methyl mesoporphyrin IX (NMM). Helicase activity on forked duplexes is not inhibited by T4 or NMM. G-quadruplex ligands such as Pyridostatin, PhenDC3, BRACO-19 and Netropsin can alter recognition and unwinding of G-quadruplex DNAs; the effect is both ligand- and G-quadruplex DNA-specific. DNA-dependent ATPase and 5'-3' DNA helicase. Can also unwind DNA:RNA hybrid duplexes. Is active on D-loops, R-loops, and on forked structures. Unwinds G-quadruplex DNA in a 5'-3' direction; unwinding efficiency differs on different substrates. Does not appear to unwind replication forks or Holliday junctions. Translocates on single-stranded (ss)DNA with a 5'-3' polarity. In vitro at high concentrations also unwinds in a 3'-5' direction. May be involved in recombinational DNA repair and the resumption of replication after DNA damage. The [4Fe-4S] cluster is redox active at cellular potentials and is involved in DNA-mediated charge-transport signaling between DNA repair proteins from distinct pathways. DinG cooperates at long-range with endonuclease III, a base excision repair enzyme, using DNA charge transport to redistribute to regions of DNA damage. Binds 10-11 nucleotides of ssDNA in a positively-charged groove across the helicase domains. The sequence is that of ATP-dependent DNA helicase DinG from Escherichia coli (strain K12).